The sequence spans 264 residues: 3-methyl-2-oxobutanoate hydroxymethyltransferase (264 aa).

Mg(2+)-binding residues include aspartate 45 and aspartate 84. 3-methyl-2-oxobutanoate-binding positions include 45-46, aspartate 84, and lysine 112; that span reads DS. Residue glutamate 114 participates in Mg(2+) binding. Catalysis depends on glutamate 181, which acts as the Proton acceptor.

Belongs to the PanB family. Homodecamer; pentamer of dimers. Requires Mg(2+) as cofactor.

The protein localises to the cytoplasm. It carries out the reaction 3-methyl-2-oxobutanoate + (6R)-5,10-methylene-5,6,7,8-tetrahydrofolate + H2O = 2-dehydropantoate + (6S)-5,6,7,8-tetrahydrofolate. It participates in cofactor biosynthesis; (R)-pantothenate biosynthesis; (R)-pantoate from 3-methyl-2-oxobutanoate: step 1/2. Its function is as follows. Catalyzes the reversible reaction in which hydroxymethyl group from 5,10-methylenetetrahydrofolate is transferred onto alpha-ketoisovalerate to form ketopantoate. The protein is 3-methyl-2-oxobutanoate hydroxymethyltransferase of Psychromonas ingrahamii (strain DSM 17664 / CCUG 51855 / 37).